Consider the following 620-residue polypeptide: Glutathione-regulated potassium-efflux system protein KefC (620 aa).

12 helical membrane-spanning segments follow: residues 4-24, 26-46, 54-74, 90-110, 114-134, 149-169, 178-198, 218-238, 270-290, 294-314, 327-347, and 359-379; these read HTLIQALIYLGSAALIVPIAV, LGLGSVLGYLIAGCIIGPWGL, SILHFAEIGVVLMLFIIGLEL, GALQMVICGGLLGLFCMLLGL, VAELIGMTLALSSTAIAMQAM, FAVLLFQDIAAIPLVAMIPLL, MGAFALSALKVAGALVLVVLL, VFSAVALFLVFGFGLLLEEVG, GLLLGLFFIGVGMSIDFGTLL, LRIVILLLGFLIIKIAMLWLI, WFAVLLGQGSEFAFVVFGAAQ, and SLTLAVALSMAATPILLVILN. In terms of domain architecture, RCK N-terminal spans 399-518; the sequence is QPRVIIAGFG…AGVEKPERET (120 aa). The disordered stretch occupies residues 597-620; that stretch reads GWQGTEEGKHTGNMADEPETKPSS.

The protein belongs to the monovalent cation:proton antiporter 2 (CPA2) transporter (TC 2.A.37) family. KefC subfamily. In terms of assembly, homodimer. Interacts with the regulatory subunit KefF.

The protein resides in the cell inner membrane. Its function is as follows. Pore-forming subunit of a potassium efflux system that confers protection against electrophiles. Catalyzes K(+)/H(+) antiport. In Escherichia coli (strain K12 / MC4100 / BW2952), this protein is Glutathione-regulated potassium-efflux system protein KefC.